A 179-amino-acid polypeptide reads, in one-letter code: IMPACT family member in pol 5'region (179 aa).

The protein belongs to the IMPACT family.

This is IMPACT family member in pol 5'region from Thermus thermophilus.